Reading from the N-terminus, the 207-residue chain is NADH-quinone oxidoreductase subunit C (207 aa).

Belongs to the complex I 30 kDa subunit family. In terms of assembly, NDH-1 is composed of 14 different subunits. Subunits NuoB, C, D, E, F, and G constitute the peripheral sector of the complex.

Its subcellular location is the cell inner membrane. It catalyses the reaction a quinone + NADH + 5 H(+)(in) = a quinol + NAD(+) + 4 H(+)(out). NDH-1 shuttles electrons from NADH, via FMN and iron-sulfur (Fe-S) centers, to quinones in the respiratory chain. The immediate electron acceptor for the enzyme in this species is believed to be ubiquinone. Couples the redox reaction to proton translocation (for every two electrons transferred, four hydrogen ions are translocated across the cytoplasmic membrane), and thus conserves the redox energy in a proton gradient. The sequence is that of NADH-quinone oxidoreductase subunit C from Rickettsia felis (strain ATCC VR-1525 / URRWXCal2) (Rickettsia azadi).